The primary structure comprises 753 residues: 5-methyltetrahydropteroyltriglutamate--homocysteine methyltransferase (753 aa).

Residues 17-20 (RELK) and Lys117 each bind 5-methyltetrahydropteroyltri-L-glutamate. Residues 431–433 (IGS) and Glu484 contribute to the L-homocysteine site. L-methionine is bound by residues 431 to 433 (IGS) and Glu484. 5-methyltetrahydropteroyltri-L-glutamate contacts are provided by residues 515 to 516 (RC) and Trp561. Position 599 (Asp599) interacts with L-homocysteine. Residue Asp599 participates in L-methionine binding. Position 605 (Glu605) interacts with 5-methyltetrahydropteroyltri-L-glutamate. Residues His641, Cys643, and Glu665 each coordinate Zn(2+). The Proton donor role is filled by His694. Residue Cys726 coordinates Zn(2+).

This sequence belongs to the vitamin-B12 independent methionine synthase family. Zn(2+) is required as a cofactor.

The enzyme catalyses 5-methyltetrahydropteroyltri-L-glutamate + L-homocysteine = tetrahydropteroyltri-L-glutamate + L-methionine. Its pathway is amino-acid biosynthesis; L-methionine biosynthesis via de novo pathway; L-methionine from L-homocysteine (MetE route): step 1/1. In terms of biological role, catalyzes the transfer of a methyl group from 5-methyltetrahydrofolate to homocysteine resulting in methionine formation. This is 5-methyltetrahydropteroyltriglutamate--homocysteine methyltransferase from Escherichia coli O157:H7.